Here is a 565-residue protein sequence, read N- to C-terminus: Carboxylesterase 1D (565 aa).

The first 18 residues, 1–18 (MGLYPLIWLSLAACTAWG), serve as a signal peptide directing secretion. N-linked (GlcNAc...) asparagine glycosylation occurs at asparagine 79. Cysteines 87 and 116 form a disulfide. Serine 221 serves as the catalytic Acyl-ester intermediate. Cysteine 273 and cysteine 284 are oxidised to a cystine. The Charge relay system role is filled by glutamate 353. Lysine 382 bears the N6-succinyllysine mark. The active-site Charge relay system is histidine 466. The N-linked (GlcNAc...) asparagine glycan is linked to asparagine 489. A Prevents secretion from ER motif is present at residues 562-565 (HVEL).

The protein belongs to the type-B carboxylesterase/lipase family. In terms of assembly, homotrimer. In terms of tissue distribution, highest expression occurs in liver with lower levels in adipose tissue, kidney, heart, intestine, lung, testis and thymus.

It is found in the endoplasmic reticulum lumen. The protein resides in the cytoplasm. The protein localises to the cytosol. Its subcellular location is the lipid droplet. It localises to the microsome. The enzyme catalyses a carboxylic ester + H2O = an alcohol + a carboxylate + H(+). It catalyses the reaction a long-chain fatty acyl ethyl ester + H2O = a long-chain fatty acid + ethanol + H(+). It carries out the reaction all-trans-retinyl hexadecanoate + H2O = all-trans-retinol + hexadecanoate + H(+). Functionally, major lipase in white adipose tissue. Involved in the metabolism of xenobiotics and of natural substrates. Hydrolyzes triacylglycerols and monoacylglycerols, with a preference for monoacylglycerols. The susceptibility of the substrate increases with decreasing acyl chain length of the fatty acid moiety. Catalyzes the synthesis of fatty acid ethyl esters. Hydrolyzes retinyl esters. The polypeptide is Carboxylesterase 1D (Mus musculus (Mouse)).